Reading from the N-terminus, the 272-residue chain is Glutamate racemase (272 aa).

Substrate-binding positions include 13 to 14 (DS) and 45 to 46 (YG). The Proton donor/acceptor role is filled by Cys-76. 77-78 (NT) contributes to the substrate binding site. Cys-186 acts as the Proton donor/acceptor in catalysis. Residue 187–188 (TH) coordinates substrate.

This sequence belongs to the aspartate/glutamate racemases family.

The enzyme catalyses L-glutamate = D-glutamate. It participates in cell wall biogenesis; peptidoglycan biosynthesis. In terms of biological role, provides the (R)-glutamate required for cell wall biosynthesis. This is Glutamate racemase from Cupriavidus pinatubonensis (strain JMP 134 / LMG 1197) (Cupriavidus necator (strain JMP 134)).